A 240-amino-acid chain; its full sequence is Probable septum site-determining protein MinC (240 aa).

It belongs to the MinC family. In terms of assembly, interacts with MinD and FtsZ.

Cell division inhibitor that blocks the formation of polar Z ring septums. Rapidly oscillates between the poles of the cell to destabilize FtsZ filaments that have formed before they mature into polar Z rings. Prevents FtsZ polymerization. The protein is Probable septum site-determining protein MinC of Buchnera aphidicola subsp. Cinara cedri (strain Cc).